Consider the following 73-residue polypeptide: UPF0235 protein HY04AAS1_1378 (73 aa).

Belongs to the UPF0235 family.

The polypeptide is UPF0235 protein HY04AAS1_1378 (Hydrogenobaculum sp. (strain Y04AAS1)).